Consider the following 335-residue polypeptide: MSDSVKTTVDPLLKDLDGKKESFRRNVVSMAAELKQVRGRLVSQEQFFVKESFCRKEAEKKAKNMEMEICKLQKKLEDRNCELVASTSAAEKFLEEVDDLRSQLALTKDIAETSAASAQSAQLQCSVLTEQLDDKTRSLREHEDRVTHLGHQLDNLQRDLKTRECSQKQLREEVMRIEREITEAVAKSGKGTECELRKLLEEVSPKNFERMNMLLAVKDEEIAKLKDDVKLMSAHWKLKTKELESQLERQRRADQELKKKVLKLEFCLQEARSQTRKLQRAGERRDKAIKELSDQITGKQLNESVSGEKQNFWDTSGFKIVVSMSMLILVIISKR.

2 coiled-coil regions span residues 55-85 and 125-260; these read RKEAEKKAKNMEMEICKLQKKLEDRNCELVA and CSVL…LKKK. Residues 239–260 carry the Bipartite nuclear localization signal motif; it reads KTKELESQLERQRRADQELKKK. A helical transmembrane segment spans residues 312-329; it reads FWDTSGFKIVVSMSMLIL.

Forms homomers and heteromers with NEAP1 and NEAP3. Interacts with SUN1 and SUN2.

The protein localises to the nucleus inner membrane. Its subcellular location is the nucleus. It is found in the nucleoplasm. In Arabidopsis thaliana (Mouse-ear cress), this protein is Nuclear envelope-associated protein 2.